The chain runs to 571 residues: MPQVTFNDVAIDFTHEEWGWLSSAQRDLYKDVMVQNYENLVSVAGLSVTKPYVITLLEDGKEPWMMEKKLSKGMIPDWESRWENKELSTKKDNYDEDSPQTVIIEKVVKQSYEFSNSKKNLEYIEKLEGKHGSQVDHFRPAILTSRESPTADSVYKYNIFRSTFHSKSTLSEPQKISAEGNSHKYDILKKNLPKKSVIKNEKVNGGKKLLNSNKSGAAFSQGKSLTLPQTCNREKIYTCSECGKAFGKQSILNRHWRIHTGEKPYECRECGKTFSHGSSLTRHLISHSGEKPYKCIECGKAFSHVSSLTNHQSTHTGEKPYECMNCGKSFSRVSHLIEHLRIHTQEKLYECRICGKAFIHRSSLIHHQKIHTGEKPYECRECGKAFCCSSHLTRHQRIHTMEKQYECNKCLKVFSSLSFLVQHQSIHTEEKPFECQKCRKSFNQLESLNMHLRNHIRLKPYECSICGKAFSHRSSLLQHHRIHTGEKPYECIKCGKTFSCSSNLTVHQRIHTGEKPYKCNECGKAFSKGSNLTAHQRVHNGEKPNSVVSVEKPLDYMNHYTCEKSYRRETV.

Residues 4–76 (VTFNDVAIDF…EKKLSKGMIP (73 aa)) form the KRAB domain. Residues lysine 109 and lysine 126 each participate in a glycyl lysine isopeptide (Lys-Gly) (interchain with G-Cter in SUMO2) cross-link. 11 C2H2-type zinc fingers span residues 237–259 (YTCSECGKAFGKQSILNRHWRIH), 265–287 (YECRECGKTFSHGSSLTRHLISH), 293–315 (YKCIECGKAFSHVSSLTNHQSTH), 321–343 (YECMNCGKSFSRVSHLIEHLRIH), 349–371 (YECRICGKAFIHRSSLIHHQKIH), 377–399 (YECRECGKAFCCSSHLTRHQRIH), 405–427 (YECNKCLKVFSSLSFLVQHQSIH), 433–455 (FECQKCRKSFNQLESLNMHLRNH), 461–483 (YECSICGKAFSHRSSLLQHHRIH), 489–511 (YECIKCGKTFSCSSNLTVHQRIH), and 517–539 (YKCNECGKAFSKGSNLTAHQRVH).

Belongs to the krueppel C2H2-type zinc-finger protein family.

The protein resides in the nucleus. Its function is as follows. May be involved in transcriptional regulation. The sequence is that of Zinc finger protein 181 (ZNF181) from Homo sapiens (Human).